Reading from the N-terminus, the 551-residue chain is ATP-dependent DNA helicase XPD (551 aa).

The Helicase ATP-binding domain occupies 1 to 228; sequence MLKLRDWQEK…KLLNQLREVV (228 aa). 29–36 provides a ligand contact to ATP; it reads APTGSGKT. 4 residues coordinate [4Fe-4S] cluster: Cys88, Cys102, Cys105, and Cys137. Positions 180–183 match the DEAH box motif; it reads DEAH.

Belongs to the helicase family. RAD3/XPD subfamily. In terms of assembly, monomer. [4Fe-4S] cluster serves as cofactor.

The catalysed reaction is Couples ATP hydrolysis with the unwinding of duplex DNA at the replication fork by translocating in the 5'-3' direction. This creates two antiparallel DNA single strands (ssDNA). The leading ssDNA polymer is the template for DNA polymerase III holoenzyme which synthesizes a continuous strand.. The enzyme catalyses ATP + H2O = ADP + phosphate + H(+). In terms of biological role, ATP-dependent 5'-3' DNA helicase. Thought to be involved in nucleotide excision repair (NER) of DNA. In Sulfolobus acidocaldarius (strain ATCC 33909 / DSM 639 / JCM 8929 / NBRC 15157 / NCIMB 11770), this protein is ATP-dependent DNA helicase XPD.